We begin with the raw amino-acid sequence, 1029 residues long: Tyrosine-protein kinase-like otk (1029 aa).

The N-terminal stretch at 1–18 (MISIYGLVMALMMASVLA) is a signal peptide. The Extracellular portion of the chain corresponds to 19-577 (SSSRFQRVPQ…GGDGFLVTRA (559 aa)). Ig-like C2-type domains follow at residues 21-110 (SRFQ…AKLS), 109-195 (LSVI…RVMS), 247-361 (PEDL…APIS), 364-459 (PGIL…VAIN), and 464-554 (PKFS…VQLV). N-linked (GlcNAc...) asparagine glycosylation is present at asparagine 35. 4 cysteine pairs are disulfide-bonded: cysteine 42-cysteine 91, cysteine 133-cysteine 184, cysteine 272-cysteine 350, and cysteine 395-cysteine 443. N-linked (GlcNAc...) asparagine glycans are attached at residues asparagine 332, asparagine 413, asparagine 425, asparagine 440, asparagine 453, asparagine 508, and asparagine 520. An intrachain disulfide couples cysteine 486 to cysteine 538. Residues 578-598 (VLITMTVALAYIVLVVGLMLW) form a helical membrane-spanning segment. Residues 599 to 1029 (CRYRRQARKA…LSKAMQSAEK (431 aa)) are Cytoplasmic-facing. 2 disordered regions span residues 613-675 (LSTK…KKSA) and 714-756 (SPSD…KTSM). Over residues 651-669 (KSSGDAQKSDDTACSQQSR) the composition is skewed to polar residues. Phosphoserine is present on serine 674. The Protein kinase; inactive domain occupies 688–1024 (LSELIQIGRG…QLGAALSKAM (337 aa)). Over residues 716–727 (SDKDADTEKQHS) the composition is skewed to basic and acidic residues.

This sequence belongs to the protein kinase superfamily. Tyr protein kinase family. Insulin receptor subfamily. In terms of assembly, interacts with plexA; component of a receptor complex that mediates the repulsive signaling in response to Semaphorin ligands.

The protein resides in the cell membrane. In terms of biological role, acts as a calcium-dependent, homophilic cell adhesion molecule that regulates neural recognition during the development of the nervous system. Component of the repulsive Plexin signaling response to regulate motor axon guidance at the embryonic stage. Also component of a receptor complex that is required in the adult visual system to innervate the lamina layer; specific targeting of R1-R6 axons. The polypeptide is Tyrosine-protein kinase-like otk (Drosophila simulans (Fruit fly)).